The primary structure comprises 453 residues: Dihydrolipoyllysine-residue succinyltransferase component of 2-oxoglutarate dehydrogenase complex, mitochondrial (453 aa).

The transit peptide at 1-67 (MLSRSRCVSR…RFFRTTAVCK (67 aa)) directs the protein to the mitochondrion. The Lipoyl-binding domain maps to 70–144 (LVTVKTPAFA…EGGTPLFTLR (75 aa)). S81 is modified (phosphoserine). The residue at position 110 (K110) is an N6-lipoyllysine. Positions 152–172 (KAKPAEAPAAAAPKAEPTAAA) are enriched in low complexity. Residues 152-225 (KAKPAEAPAA…GKGLRSEHRE (74 aa)) are disordered. At K154 the chain carries N6-acetyllysine. Residues 173 to 196 (VPPPAAPIPTQMPPVPSPSQPPSG) show a composition bias toward pro residues. 5 positions are modified to N6-acetyllysine: K267, K272, K273, K277, and K307. Residues H424 and D428 contribute to the active site.

It belongs to the 2-oxoacid dehydrogenase family. In terms of assembly, the 2-oxoglutarate dehydrogenase complex is composed of OGDH (2-oxoglutarate dehydrogenase; E1), DLST (dihydrolipoamide succinyltransferase; E2), DLD (dihydrolipoamide dehydrogenase; E3) and the assembly factor KGD4. It contains multiple copies of the three enzymatic components (E1, E2 and E3). In the nucleus, the 2-oxoglutarate dehydrogenase complex associates with KAT2A. Interacts with ABHD11; this interaction maintains the functional lipoylation of the 2-oxoglutarate dehydrogenase complex. (R)-lipoate is required as a cofactor.

Its subcellular location is the mitochondrion matrix. The protein localises to the nucleus. The enzyme catalyses N(6)-[(R)-dihydrolipoyl]-L-lysyl-[protein] + succinyl-CoA = N(6)-[(R)-S(8)-succinyldihydrolipoyl]-L-lysyl-[protein] + CoA. It functions in the pathway amino-acid degradation; L-lysine degradation via saccharopine pathway; glutaryl-CoA from L-lysine: step 6/6. Its pathway is carbohydrate metabolism; tricarboxylic acid cycle. Dihydrolipoamide succinyltransferase (E2) component of the 2-oxoglutarate dehydrogenase complex. The 2-oxoglutarate dehydrogenase complex catalyzes the overall conversion of 2-oxoglutarate to succinyl-CoA and CO(2). The 2-oxoglutarate dehydrogenase complex is mainly active in the mitochondrion. A fraction of the 2-oxoglutarate dehydrogenase complex also localizes in the nucleus and is required for lysine succinylation of histones: associates with KAT2A on chromatin and provides succinyl-CoA to histone succinyltransferase KAT2A. This Homo sapiens (Human) protein is Dihydrolipoyllysine-residue succinyltransferase component of 2-oxoglutarate dehydrogenase complex, mitochondrial.